A 20-amino-acid polypeptide reads, in one-letter code: Hemoglobinase-like protein 1 (20 aa).

It belongs to the peptidase C13 family.

It catalyses the reaction Hydrolysis of proteins and small molecule substrates at -Asn-|-Xaa- bonds.. In Fasciola hepatica (Liver fluke), this protein is Hemoglobinase-like protein 1.